The sequence spans 612 residues: UvrABC system protein C (612 aa).

The GIY-YIG domain maps to 18-96; it reads TRPGVYRMMD…IKTLKPPYNI (79 aa). The UVR domain occupies 208 to 243; it reads PEIINETIQQMEVASAQLDFERAAVLRDQVDYLRRV.

This sequence belongs to the UvrC family. Interacts with UvrB in an incision complex.

It is found in the cytoplasm. Its function is as follows. The UvrABC repair system catalyzes the recognition and processing of DNA lesions. UvrC both incises the 5' and 3' sides of the lesion. The N-terminal half is responsible for the 3' incision and the C-terminal half is responsible for the 5' incision. This Hahella chejuensis (strain KCTC 2396) protein is UvrABC system protein C.